The following is a 311-amino-acid chain: Probable manganese-dependent inorganic pyrophosphatase (311 aa).

The Mn(2+) site is built by histidine 9, aspartate 13, aspartate 15, aspartate 77, histidine 99, and aspartate 151.

The protein belongs to the PPase class C family. Mn(2+) is required as a cofactor.

The protein resides in the cytoplasm. The catalysed reaction is diphosphate + H2O = 2 phosphate + H(+). This Streptococcus suis (strain 98HAH33) protein is Probable manganese-dependent inorganic pyrophosphatase.